The sequence spans 479 residues: MANHPIDQELTSPAEEELTPREIVAKLDEHIISQKNAKKAVAIALRNRTRRKKLDPEMREEIYPKNIIMIGPTGVGKTEIARRLSKLCGAPFLKVEATKYTEVGYVGRDVESMIRDLAVISMNLVKQEFRTKVEETAKQKAEEALLDILLPFPGENKHGSGQITGFATSSTLADEEDRKTHFLETREFMRKKLKTGKLDDQEVELDLPNPSVSQVPMLQVFGAGNLDDLDNQLQNVLGDILPKKNKKRKLKIPEALKALEESEAEKLLDPDKVQREALRRVEEMGIIFLDEIDKIAGREGKSGADVSREGVQRDLLPIVEGATVNTKIGPVKTDHILFIAAGAFHMTKPSDLIPELQGRFPIRVELEKLSREDFEKILTAPRSSLTRQYEALLSTDGIQLEFSLDGIQEIARIAYDMNEKHENIGARRLNTILERLLEEVSFEGPDLPESQRKVRIDGKYVTDRLQGVIQNKDLSQYIL.

ATP is bound by residues I32, G74 to E79, D290, E355, and R427.

This sequence belongs to the ClpX chaperone family. HslU subfamily. A double ring-shaped homohexamer of HslV is capped on each side by a ring-shaped HslU homohexamer. The assembly of the HslU/HslV complex is dependent on binding of ATP.

The protein resides in the cytoplasm. Its function is as follows. ATPase subunit of a proteasome-like degradation complex; this subunit has chaperone activity. The binding of ATP and its subsequent hydrolysis by HslU are essential for unfolding of protein substrates subsequently hydrolyzed by HslV. HslU recognizes the N-terminal part of its protein substrates and unfolds these before they are guided to HslV for hydrolysis. The polypeptide is ATP-dependent protease ATPase subunit HslU (Leptospira interrogans serogroup Icterohaemorrhagiae serovar copenhageni (strain Fiocruz L1-130)).